Here is a 950-residue protein sequence, read N- to C-terminus: Glycine dehydrogenase (decarboxylating) (950 aa).

Lysine 698 bears the N6-(pyridoxal phosphate)lysine mark.

Belongs to the GcvP family. The glycine cleavage system is composed of four proteins: P, T, L and H. The cofactor is pyridoxal 5'-phosphate.

The enzyme catalyses N(6)-[(R)-lipoyl]-L-lysyl-[glycine-cleavage complex H protein] + glycine + H(+) = N(6)-[(R)-S(8)-aminomethyldihydrolipoyl]-L-lysyl-[glycine-cleavage complex H protein] + CO2. The glycine cleavage system catalyzes the degradation of glycine. The P protein binds the alpha-amino group of glycine through its pyridoxal phosphate cofactor; CO(2) is released and the remaining methylamine moiety is then transferred to the lipoamide cofactor of the H protein. This Neisseria gonorrhoeae (strain NCCP11945) protein is Glycine dehydrogenase (decarboxylating).